The primary structure comprises 237 residues: 1-(5-phosphoribosyl)-5-[(5-phosphoribosylamino)methylideneamino] imidazole-4-carboxamide isomerase (237 aa).

Asp-8 acts as the Proton acceptor in catalysis. Catalysis depends on Asp-129, which acts as the Proton donor.

This sequence belongs to the HisA/HisF family.

Its subcellular location is the cytoplasm. The catalysed reaction is 1-(5-phospho-beta-D-ribosyl)-5-[(5-phospho-beta-D-ribosylamino)methylideneamino]imidazole-4-carboxamide = 5-[(5-phospho-1-deoxy-D-ribulos-1-ylimino)methylamino]-1-(5-phospho-beta-D-ribosyl)imidazole-4-carboxamide. Its pathway is amino-acid biosynthesis; L-histidine biosynthesis; L-histidine from 5-phospho-alpha-D-ribose 1-diphosphate: step 4/9. The chain is 1-(5-phosphoribosyl)-5-[(5-phosphoribosylamino)methylideneamino] imidazole-4-carboxamide isomerase from Acetivibrio thermocellus (strain ATCC 27405 / DSM 1237 / JCM 9322 / NBRC 103400 / NCIMB 10682 / NRRL B-4536 / VPI 7372) (Clostridium thermocellum).